The following is a 400-amino-acid chain: Na(+)/H(+) antiporter NhaA (400 aa).

Transmembrane regions (helical) follow at residues 10–30, 60–80, 95–115, 126–146, 155–175, 178–198, 218–238, 265–285, 295–315, 334–354, and 364–384; these read FNLE…AMII, AHHW…GLEL, IILP…VYLF, GWAI…SLLG, VFLV…IALF, NDLS…LYML, IAVL…ALFI, GILP…AGFG, IAAG…WLIF, AALL…LAFA, and LGII…LKTT.

Belongs to the NhaA Na(+)/H(+) (TC 2.A.33) antiporter family.

The protein localises to the cell inner membrane. The enzyme catalyses Na(+)(in) + 2 H(+)(out) = Na(+)(out) + 2 H(+)(in). Functionally, na(+)/H(+) antiporter that extrudes sodium in exchange for external protons. This Psychrobacter arcticus (strain DSM 17307 / VKM B-2377 / 273-4) protein is Na(+)/H(+) antiporter NhaA.